The following is a 247-amino-acid chain: Small ribosomal subunit protein uS2 (247 aa).

The protein belongs to the universal ribosomal protein uS2 family.

The protein is Small ribosomal subunit protein uS2 of Halorhodospira halophila (strain DSM 244 / SL1) (Ectothiorhodospira halophila (strain DSM 244 / SL1)).